We begin with the raw amino-acid sequence, 122 residues long: Large ribosomal subunit protein uL14 (122 aa).

Belongs to the universal ribosomal protein uL14 family. As to quaternary structure, part of the 50S ribosomal subunit. Forms a cluster with proteins L3 and L19. In the 70S ribosome, L14 and L19 interact and together make contacts with the 16S rRNA in bridges B5 and B8.

Functionally, binds to 23S rRNA. Forms part of two intersubunit bridges in the 70S ribosome. The chain is Large ribosomal subunit protein uL14 from Alteromonas mediterranea (strain DSM 17117 / CIP 110805 / LMG 28347 / Deep ecotype).